The chain runs to 149 residues: Pleckstrin homology domain-containing family J member 1 (149 aa).

In terms of domain architecture, PH spans 15 to 108; the sequence is RAEKAAELSM…WVEALTNASY (94 aa).

This chain is Pleckstrin homology domain-containing family J member 1 (plekhj1), found in Xenopus tropicalis (Western clawed frog).